Consider the following 229-residue polypeptide: Uracil-DNA glycosylase (229 aa).

Catalysis depends on D70, which acts as the Proton acceptor.

It belongs to the uracil-DNA glycosylase (UDG) superfamily. UNG family.

The protein resides in the cytoplasm. The enzyme catalyses Hydrolyzes single-stranded DNA or mismatched double-stranded DNA and polynucleotides, releasing free uracil.. In terms of biological role, excises uracil residues from the DNA which can arise as a result of misincorporation of dUMP residues by DNA polymerase or due to deamination of cytosine. The protein is Uracil-DNA glycosylase of Chlamydia trachomatis serovar A (strain ATCC VR-571B / DSM 19440 / HAR-13).